Reading from the N-terminus, the 1170-residue chain is DNA-directed RNA polymerase subunit beta (1170 aa).

The protein belongs to the RNA polymerase beta chain family. The RNAP catalytic core consists of 2 alpha, 1 beta, 1 beta' and 1 omega subunit. When a sigma factor is associated with the core the holoenzyme is formed, which can initiate transcription.

It catalyses the reaction RNA(n) + a ribonucleoside 5'-triphosphate = RNA(n+1) + diphosphate. Functionally, DNA-dependent RNA polymerase catalyzes the transcription of DNA into RNA using the four ribonucleoside triphosphates as substrates. The protein is DNA-directed RNA polymerase subunit beta of Corynebacterium urealyticum (strain ATCC 43042 / DSM 7109).